Here is a 373-residue protein sequence, read N- to C-terminus: Nodulation protein NolL (373 aa).

A run of 9 helical transmembrane segments spans residues aspartate 27–isoleucine 47, serine 62–alanine 82, glutamine 98–isoleucine 118, tryptophan 140–arginine 160, tryptophan 164–proline 184, arginine 212–tryptophan 232, glutamine 253–phenylalanine 273, arginine 286–valine 306, and arginine 324–serine 344.

It belongs to the acyltransferase 3 family.

It localises to the cell membrane. Its function is as follows. Thought to be an acetyltransferase that modifies the fucose of the nod factor. This chain is Nodulation protein NolL (nolL), found in Mesorhizobium japonicum (strain LMG 29417 / CECT 9101 / MAFF 303099) (Mesorhizobium loti (strain MAFF 303099)).